The chain runs to 20 residues: 39 kDa major outer membrane protein (20 aa).

It is found in the cell outer membrane. The chain is 39 kDa major outer membrane protein from Aggregatibacter actinomycetemcomitans (Actinobacillus actinomycetemcomitans).